A 306-amino-acid polypeptide reads, in one-letter code: MLAILFNFFLLTYFTNITLGKVGKSIDLDTRNGYNVHGCYKQTGKIYAHKTYPRQYEAENYNFDDLPVAWDWRNINGVNYASVDRNQHIPQYCGSCWAFGSTSALADRFNIKRKGAWPPAYLSVQEVIDCANAGSCEGGEPGPVYKYAHEFGIPHETCNNYQARDGTCSSYNKCGSCWPGSCFSIKNYTIYRVKNYGAVSGLHKMKAEIYHHGPIACGIAATKAFETYAGGIYNERTNEDIDHIISAHGWGVDSESGVPYWIGRNSWGTPWGENGWFRIVTSEYKNSSSKYNLKIEEDCVWADPIA.

The signal sequence occupies residues 1–20; it reads MLAILFNFFLLTYFTNITLG. Residues 21 to 65 constitute a propeptide, activation peptide; the sequence is KVGKSIDLDTRNGYNVHGCYKQTGKIYAHKTYPRQYEAENYNFDD. Cystine bridges form between C39–C96, C93–C136, C130–C168, C158–C174, and C177–C182. C96 is an active-site residue. Residue N187 is glycosylated (N-linked (GlcNAc...) asparagine). C217 and C299 are disulfide-bonded. Active-site residues include H243 and N265. N-linked (GlcNAc...) asparagine glycosylation is present at N286.

It belongs to the peptidase C1 family.

It localises to the cytoplasmic vesicle. It is found in the secretory vesicle. The protein resides in the secreted. The enzyme catalyses Release of C-terminal amino acid residues with broad specificity, but lacks action on C-terminal proline. Shows weak endopeptidase activity.. With respect to regulation, the disulfide bridge formed between Cys-39 in the propeptide and the active site residue Cys-96 may prevent activation of the zymogen through formation of a reversible covalent bond with the active site residue. In terms of biological role, exhibits carboxy-monopeptidase as well as carboxy-dipeptidase activity. Plays an essential role in molting, a process during larval stages in which a new cuticle is formed and the old cuticle is shed. Required for the degradation and shedding of the old cuticle. This chain is Cathepsin Z, found in Onchocerca volvulus.